A 170-amino-acid chain; its full sequence is Protein SprT (170 aa).

One can recognise a SprT-like domain in the interval 23–164 (QLARQHFSVE…CRQCGDKLKF (142 aa)). Residue H78 participates in Zn(2+) binding. E79 is an active-site residue. Zn(2+) is bound at residue H82.

The protein belongs to the SprT family. Zn(2+) serves as cofactor.

It localises to the cytoplasm. In Serratia proteamaculans (strain 568), this protein is Protein SprT.